A 643-amino-acid chain; its full sequence is Protein THEMIS2 (643 aa).

2 CABIT regions span residues Met-1–Ser-238 and Arg-239–Gly-514. Residues Glu-546–Asp-631 form a disordered region. Position 593 is a phosphothreonine (Thr-593). Basic residues predominate over residues Pro-609 to Lys-619. Tyr-632 is modified (phosphotyrosine).

The protein belongs to the themis family. In terms of assembly, interacts with VAV1. Interacts with LAT. Interacts constitutively with GRB2, LYN and PLCG2; these interactions increase the activation of PLCG2 and its downstream pathways following B cell receptor stimulation. In terms of processing, phosphorylation at Tyr-632 is induced by LPS. Phosphorylated by Src kinases (Lck or Fyn) following BCR engagement. Expressed in different endometrial adenocarcinoma cell lines and various other cell lines apart from the prostate cell line LNCaP and the ovarian cancer cell line BG1.

The protein resides in the nucleus. Its subcellular location is the cytoplasm. Functionally, may constitute a control point in macrophage inflammatory response, promoting LPS-induced TLR4-mediated TNF production. Determines the threshold for activation of B cells by low-affinity and low-avidity ligands via PLCG2 activation and its downstream pathways. This Homo sapiens (Human) protein is Protein THEMIS2.